A 301-amino-acid chain; its full sequence is Homoserine O-acetyltransferase (301 aa).

The active-site Acyl-thioester intermediate is the cysteine 142. Substrate is bound by residues lysine 163 and serine 192. The active-site Proton acceptor is histidine 235. Glutamate 237 is an active-site residue. Substrate is bound at residue arginine 249.

It belongs to the MetA family.

Its subcellular location is the cytoplasm. The catalysed reaction is L-homoserine + acetyl-CoA = O-acetyl-L-homoserine + CoA. It functions in the pathway amino-acid biosynthesis; L-methionine biosynthesis via de novo pathway; O-acetyl-L-homoserine from L-homoserine: step 1/1. Transfers an acetyl group from acetyl-CoA to L-homoserine, forming acetyl-L-homoserine. The sequence is that of Homoserine O-acetyltransferase from Bacillus cereus (strain B4264).